We begin with the raw amino-acid sequence, 286 residues long: Probable ketoamine kinase YniA (286 aa).

91–93 lines the ATP pocket; the sequence is DYL. D193 (proton acceptor) is an active-site residue.

The protein belongs to the fructosamine kinase family.

Its function is as follows. Ketoamine kinase that phosphorylates ketoamines on the third carbon of the sugar moiety to generate ketoamine 3-phosphate. The protein is Probable ketoamine kinase YniA (yniA) of Escherichia coli O157:H7.